The primary structure comprises 174 residues: Large ribosomal subunit protein uL10 (174 aa).

It belongs to the universal ribosomal protein uL10 family. As to quaternary structure, part of the ribosomal stalk of the 50S ribosomal subunit. The N-terminus interacts with L11 and the large rRNA to form the base of the stalk. The C-terminus forms an elongated spine to which L12 dimers bind in a sequential fashion forming a multimeric L10(L12)X complex.

Forms part of the ribosomal stalk, playing a central role in the interaction of the ribosome with GTP-bound translation factors. The sequence is that of Large ribosomal subunit protein uL10 from Anaeromyxobacter sp. (strain K).